The following is a 146-amino-acid chain: uncharacterized protein (146 aa).

2 helical membrane passes run 89–111 (AIEM…LLLY) and 121–143 (IGCG…YSVV).

It localises to the cell membrane. This is an uncharacterized protein from Archaeoglobus fulgidus (strain ATCC 49558 / DSM 4304 / JCM 9628 / NBRC 100126 / VC-16).